A 128-amino-acid chain; its full sequence is uncharacterized protein (128 aa).

A run of 3 helical transmembrane segments spans residues Met-1–Leu-21, Val-51–Gly-71, and Ala-76–Val-96.

It is found in the membrane. This is an uncharacterized protein from Saccharomyces cerevisiae (strain ATCC 204508 / S288c) (Baker's yeast).